Consider the following 242-residue polypeptide: Probable transcriptional regulatory protein Bxeno_A1185 (242 aa).

Belongs to the TACO1 family.

The protein resides in the cytoplasm. In Paraburkholderia xenovorans (strain LB400), this protein is Probable transcriptional regulatory protein Bxeno_A1185.